Consider the following 510-residue polypeptide: E3 ubiquitin-protein ligase TRIM7 (510 aa).

The RING-type zinc finger occupies 29 to 81; sequence CSICLEFFREPVSVECGHSFCRACIMRCWERPGAGTGTATRTLPCPLPCPQCR. The residue at position 106 (Ser-106) is a Phosphoserine; by RPS6KA5. The B box-type zinc finger occupies 124–165; that stretch reads AAAARCSQHGEQLKLYCQDDGRAICVVCDRAREHRSHAVLPL. Zn(2+) is bound by residues Cys-129, His-132, Cys-151, and His-157. Residues 165 to 275 are a coiled coil; the sequence is LEEAVQEAKE…SGQIQETAQK (111 aa). Positions 323–510 constitute a B30.2/SPRY domain; sequence LLKKFKEDLQ…STGTYLRIWP (188 aa).

Belongs to the TRIM/RBCC family. Forms homodimers. Interacts with GNIP2. Interacts with GYG1. Interacts with RNF187 (via C-terminus). Phosphorylated at Ser-106 by RPS6KA5/MSK1, which stimulates the ubiquitin ligase activity. Post-translationally, auto-ubiquitinates via 'Lys-63'-linked polyubiquitination. As to expression, highly expressed in antigen-presenting cells.

It is found in the nucleus. The protein localises to the cytoplasm. Its subcellular location is the golgi apparatus. The enzyme catalyses S-ubiquitinyl-[E2 ubiquitin-conjugating enzyme]-L-cysteine + [acceptor protein]-L-lysine = [E2 ubiquitin-conjugating enzyme]-L-cysteine + N(6)-ubiquitinyl-[acceptor protein]-L-lysine.. The protein operates within protein modification; protein ubiquitination. In terms of biological role, E3 ubiquitin-protein ligase that have both tumor-promoting and tumor-suppressing activities and functions in several biological processes including innate immunity, regulation of ferroptosis as well as cell proliferation and migration. Acts as an antiviral effector against multiple viruses by targeting specific viral proteins for ubiquitination and degradation including norovirus NTPase protein. Mechanistically, recognizes the C-terminal glutamine-containing motif generated by viral proteases that process the polyproteins and trigger their ubiquitination and subsequent degradation. Mediates 'Lys-63'-linked polyubiquitination and stabilization of the JUN coactivator RNF187 in response to growth factor signaling via the MEK/ERK pathway, thereby regulating JUN transactivation and cellular proliferation. Promotes the TLR4-mediated signaling activation through its E3 ligase domain leading to production of pro-inflammatory cytokines and type I interferon. Also plays a negative role in the regulation of exogenous cytosolic DNA virus-triggered immune response. Mechanistically, enhances the 'Lys-48'-linked ubiquitination of STING1 leading to its proteasome-dependent degradation. Mediates the ubiquitination of the SIN3-HDAC chromatin remodeling complex component BRMS1. Modulates NCOA4-mediated ferritinophagy and ferroptosis in glioblastoma cells by ubiquitinating NCOA4, leading to its degradation. The chain is E3 ubiquitin-protein ligase TRIM7 (Trim7) from Mus musculus (Mouse).